The primary structure comprises 1637 residues: Probable serine/threonine-protein kinase gdt2 (1637 aa).

The N-terminal stretch at 1–19 (MNYILYILLILIIFSINNT) is a signal peptide. Residues 20 to 896 (FSIGSFVYTP…IPVEKINLLP (877 aa)) lie on the Extracellular side of the membrane. The helical transmembrane segment at 897–917 (IIVPICVTVLVLLSILIVFFG) threads the bilayer. Topologically, residues 918–1637 (ARYYKHKKRR…NNNNNNNNNN (720 aa)) are cytoplasmic. The span at 977–990 (SDIQTQSENNNLEP) shows a compositional bias: polar residues. Residues 977–1000 (SDIQTQSENNNLEPTTVETTTTTT) form a disordered region. The span at 991 to 1000 (TTVETTTTTT) shows a compositional bias: low complexity. A Protein kinase domain is found at 1290 to 1547 (IIIKNYISEG…LSKYLKHLLK (258 aa)). ATP is bound by residues 1296–1304 (ISEGTFGIV) and lysine 1317. Aspartate 1408 serves as the catalytic Proton acceptor. The segment at 1557–1637 (DKDKKNKKKN…NNNNNNNNNN (81 aa)) is disordered. Composition is skewed to low complexity over residues 1568-1589 (NNNN…NNNN) and 1597-1637 (NNNI…NNNN).

In the N-terminal section; belongs to the GDT family. It in the C-terminal section; belongs to the protein kinase superfamily. TKL Ser/Thr protein kinase family.

The protein localises to the membrane. It catalyses the reaction L-seryl-[protein] + ATP = O-phospho-L-seryl-[protein] + ADP + H(+). It carries out the reaction L-threonyl-[protein] + ATP = O-phospho-L-threonyl-[protein] + ADP + H(+). In terms of biological role, regulates the transition between growth and differentiation. In Dictyostelium discoideum (Social amoeba), this protein is Probable serine/threonine-protein kinase gdt2 (gdt2).